The following is a 372-amino-acid chain: Queuine tRNA-ribosyltransferase (372 aa).

The active-site Proton acceptor is the Asp89. Substrate contacts are provided by residues 89–93 (DSGGF), Asp161, and Gly232. The segment at 262-268 (GIGDLPS) is RNA binding. The active-site Nucleophile is Asp281. The interval 286 to 290 (TKAAR) is RNA binding; important for wobble base 34 recognition. Residues Cys319, Cys321, Cys324, and His351 each contribute to the Zn(2+) site.

The protein belongs to the queuine tRNA-ribosyltransferase family. Homodimer. Within each dimer, one monomer is responsible for RNA recognition and catalysis, while the other monomer binds to the replacement base PreQ1. It depends on Zn(2+) as a cofactor.

It catalyses the reaction 7-aminomethyl-7-carbaguanine + guanosine(34) in tRNA = 7-aminomethyl-7-carbaguanosine(34) in tRNA + guanine. Its pathway is tRNA modification; tRNA-queuosine biosynthesis. Its function is as follows. Catalyzes the base-exchange of a guanine (G) residue with the queuine precursor 7-aminomethyl-7-deazaguanine (PreQ1) at position 34 (anticodon wobble position) in tRNAs with GU(N) anticodons (tRNA-Asp, -Asn, -His and -Tyr). Catalysis occurs through a double-displacement mechanism. The nucleophile active site attacks the C1' of nucleotide 34 to detach the guanine base from the RNA, forming a covalent enzyme-RNA intermediate. The proton acceptor active site deprotonates the incoming PreQ1, allowing a nucleophilic attack on the C1' of the ribose to form the product. After dissociation, two additional enzymatic reactions on the tRNA convert PreQ1 to queuine (Q), resulting in the hypermodified nucleoside queuosine (7-(((4,5-cis-dihydroxy-2-cyclopenten-1-yl)amino)methyl)-7-deazaguanosine). In Chlamydia caviae (strain ATCC VR-813 / DSM 19441 / 03DC25 / GPIC) (Chlamydophila caviae), this protein is Queuine tRNA-ribosyltransferase.